Reading from the N-terminus, the 21-residue chain is Fibrinogen beta chain (21 aa).

Glutamine 1 carries the pyrrolidone carboxylic acid modification. Over residues glutamine 1–aspartate 11 the composition is skewed to acidic residues. A disordered region spans residues glutamine 1–arginine 21. Tyrosine 6 is modified (sulfotyrosine). Residues aspartate 12–arginine 21 are compositionally biased toward basic and acidic residues.

In terms of assembly, heterohexamer; disulfide linked. Contains 2 sets of 3 non-identical chains (alpha, beta and gamma). The 2 heterotrimers are in head to head conformation with the N-termini in a small central domain. Conversion of fibrinogen to fibrin is triggered by thrombin, which cleaves fibrinopeptides A and B from alpha and beta chains, and thus exposes the N-terminal polymerization sites responsible for the formation of the soft clot.

It is found in the secreted. Functionally, cleaved by the protease thrombin to yield monomers which, together with fibrinogen alpha (FGA) and fibrinogen gamma (FGG), polymerize to form an insoluble fibrin matrix. Fibrin has a major function in hemostasis as one of the primary components of blood clots. In addition, functions during the early stages of wound repair to stabilize the lesion and guide cell migration during re-epithelialization. Was originally thought to be essential for platelet aggregation, based on in vitro studies using anticoagulated blood. However subsequent studies have shown that it is not absolutely required for thrombus formation in vivo. Enhances expression of SELP in activated platelets. Maternal fibrinogen is essential for successful pregnancy. Fibrin deposition is also associated with infection, where it protects against IFNG-mediated hemorrhage. May also facilitate the antibacterial immune response via both innate and T-cell mediated pathways. This is Fibrinogen beta chain (FGB) from Antilocapra americana (Pronghorn).